The chain runs to 224 residues: Peroxiredoxin-like 2A (224 aa).

Positions 14 to 112 are thioredoxin fold; that stretch reads MWSVGLGAVG…SKLGVPLYAV (99 aa). A non-standard amino acid (selenocysteine) is located at residue Sec85. The active-site Redox-active is Cys88.

This sequence belongs to the peroxiredoxin-like PRXL2 family. PRXL2A subfamily.

It localises to the cytoplasm. In terms of biological role, involved in redox regulation of the cell. Acts as an antioxidant. Inhibits TNFSF11-induced NFKB1 and JUN activation and osteoclast differentiation. May affect bone resorption and help to maintain bone mass. The chain is Peroxiredoxin-like 2A (PRXL2A) from Gallus gallus (Chicken).